We begin with the raw amino-acid sequence, 161 residues long: Large ribosomal subunit protein uL15 (161 aa).

Residues Met1–Ser42 form a disordered region. Over residues Arg21–Gly37 the composition is skewed to gly residues.

Belongs to the universal ribosomal protein uL15 family. Part of the 50S ribosomal subunit.

Functionally, binds to the 23S rRNA. In Bradyrhizobium diazoefficiens (strain JCM 10833 / BCRC 13528 / IAM 13628 / NBRC 14792 / USDA 110), this protein is Large ribosomal subunit protein uL15.